Here is a 239-residue protein sequence, read N- to C-terminus: Lactose-binding lectin-2 (239 aa).

The Mn(2+) site is built by glutamate 122 and aspartate 124. 4 residues coordinate Ca(2+): aspartate 124, tyrosine 126, asparagine 128, and aspartate 131. Mn(2+)-binding residues include aspartate 131 and histidine 137.

Belongs to the leguminous lectin family. In terms of assembly, homotetramer. In terms of tissue distribution, seed.

The protein resides in the vacuole. It is found in the aleurone grain. Lactose-binding lectin. Also binds derivatives of galactose, glucose, lactose, and mannose. Binds O-glycoproteins such as mucins more strongly than N-glycoproteins. Shows agglutinating activity towards rabbit erythrocytes. The protein is Lactose-binding lectin-2 of Cymbosema roseum (Dioclea purpurea).